The primary structure comprises 257 residues: NAD kinase (257 aa).

The active-site Proton acceptor is the aspartate 44. NAD(+)-binding positions include aspartate 44–glycine 45, arginine 49, asparagine 116–glutamate 117, aspartate 146, alanine 154, and threonine 157–serine 162.

The protein belongs to the NAD kinase family. Requires a divalent metal cation as cofactor.

Its subcellular location is the cytoplasm. The enzyme catalyses NAD(+) + ATP = ADP + NADP(+) + H(+). In terms of biological role, involved in the regulation of the intracellular balance of NAD and NADP, and is a key enzyme in the biosynthesis of NADP. Catalyzes specifically the phosphorylation on 2'-hydroxyl of the adenosine moiety of NAD to yield NADP. This is NAD kinase from Rhizorhabdus wittichii (strain DSM 6014 / CCUG 31198 / JCM 15750 / NBRC 105917 / EY 4224 / RW1) (Sphingomonas wittichii).